The following is a 373-amino-acid chain: UDP-N-acetylenolpyruvoylglucosamine reductase (373 aa).

The 174-residue stretch at L30–D203 folds into the FAD-binding PCMH-type domain. R180 is a catalytic residue. S258 acts as the Proton donor in catalysis. E356 is a catalytic residue.

It belongs to the MurB family. FAD is required as a cofactor.

The protein localises to the cytoplasm. The catalysed reaction is UDP-N-acetyl-alpha-D-muramate + NADP(+) = UDP-N-acetyl-3-O-(1-carboxyvinyl)-alpha-D-glucosamine + NADPH + H(+). It participates in cell wall biogenesis; peptidoglycan biosynthesis. Its function is as follows. Cell wall formation. The sequence is that of UDP-N-acetylenolpyruvoylglucosamine reductase from Psychrobacter cryohalolentis (strain ATCC BAA-1226 / DSM 17306 / VKM B-2378 / K5).